The sequence spans 418 residues: Putative ion-transport protein YfeO (418 aa).

12 helical membrane passes run 10 to 30 (LLLS…LIVV), 54 to 74 (DSPF…GLVI), 99 to 119 (ALPG…SLGP), 120 to 140 (EHPI…RLLP), 149 to 169 (ILAS…AALI), 186 to 206 (LFAP…FFHP), 223 to 243 (ILSG…AVWC), 258 to 278 (VLML…AGPV), 300 to 320 (DYFL…ASGF), 322 to 342 (GGRI…LHEH), 343 to 363 (VPAV…VLVV), and 371 to 391 (LFMA…CIVM).

It belongs to the chloride channel (TC 2.A.49) family.

The protein localises to the cell membrane. This chain is Putative ion-transport protein YfeO, found in Escherichia coli (strain SMS-3-5 / SECEC).